The sequence spans 142 residues: Large ribosomal subunit protein uL13 (142 aa).

Belongs to the universal ribosomal protein uL13 family. Part of the 50S ribosomal subunit.

In terms of biological role, this protein is one of the early assembly proteins of the 50S ribosomal subunit, although it is not seen to bind rRNA by itself. It is important during the early stages of 50S assembly. The chain is Large ribosomal subunit protein uL13 from Aliivibrio fischeri (strain ATCC 700601 / ES114) (Vibrio fischeri).